Here is a 118-residue protein sequence, read N- to C-terminus: Large ribosomal subunit protein bL19 (118 aa).

Belongs to the bacterial ribosomal protein bL19 family.

In terms of biological role, this protein is located at the 30S-50S ribosomal subunit interface and may play a role in the structure and function of the aminoacyl-tRNA binding site. This chain is Large ribosomal subunit protein bL19, found in Dictyoglomus turgidum (strain DSM 6724 / Z-1310).